We begin with the raw amino-acid sequence, 388 residues long: Chalcone synthase LF3 (388 aa).

Residue Cys164 is part of the active site.

The protein belongs to the thiolase-like superfamily. Chalcone/stilbene synthases family.

It catalyses the reaction (E)-4-coumaroyl-CoA + 3 malonyl-CoA + 3 H(+) = 2',4,4',6'-tetrahydroxychalcone + 3 CO2 + 4 CoA. The protein operates within secondary metabolite biosynthesis; flavonoid biosynthesis. Its function is as follows. The primary product of this enzyme is 4,2',4',6'-tetrahydroxychalcone (also termed naringenin-chalcone or chalcone) which can under specific conditions spontaneously isomerize into naringenin. The chain is Chalcone synthase LF3 (CHS-LF3) from Ipomoea batatas (Sweet potato).